The following is a 284-amino-acid chain: Large ribosomal subunit protein uL2 (284 aa).

The disordered stretch occupies residues 232-284; that stretch reads RGTAMNPVDHPHGGGEGRHNGYIPRTPWGKVTKGLKTRDKRKSNKWIVKDRRK. Positions 240–250 are enriched in basic and acidic residues; that stretch reads DHPHGGGEGRH. Over residues 264–284 the composition is skewed to basic residues; that stretch reads KGLKTRDKRKSNKWIVKDRRK.

The protein belongs to the universal ribosomal protein uL2 family. As to quaternary structure, part of the 50S ribosomal subunit. Forms a bridge to the 30S subunit in the 70S ribosome.

One of the primary rRNA binding proteins. Required for association of the 30S and 50S subunits to form the 70S ribosome, for tRNA binding and peptide bond formation. It has been suggested to have peptidyltransferase activity; this is somewhat controversial. Makes several contacts with the 16S rRNA in the 70S ribosome. The polypeptide is Large ribosomal subunit protein uL2 (Chlamydia felis (strain Fe/C-56) (Chlamydophila felis)).